A 949-amino-acid polypeptide reads, in one-letter code: ATPase 1, plasma membrane-type (949 aa).

Ser2 bears the N-acetylserine mark. The Cytoplasmic portion of the chain corresponds to 2-61 (SGLEDIKNETVDLEKIPIEEVFQQLKCTREGLTTQEGEDRIVIFGPNKLEEKKESKILKF). The chain crosses the membrane as a helical span at residues 62–81 (LGFMWNPLSWVMEAAALMAI). Topologically, residues 82–93 (ALANGDNRPPDW) are extracellular. A helical membrane pass occupies residues 94–114 (QDFVGIICLLVINSTISFIEE). Topologically, residues 115-243 (NNAGNAAAAL…GHFQKVLTSI (129 aa)) are cytoplasmic. A helical membrane pass occupies residues 244–264 (GNFCICSIAIGIAIEIVVMYP). Residues 265 to 273 (IQHRKYRDG) lie on the Extracellular side of the membrane. Residues 274–291 (IDNLLVLLIGGIPIAMPT) form a helical membrane-spanning segment. At 292–643 (VLSVTMAIGS…TSRAIFQRMK (352 aa)) the chain is on the cytoplasmic side. Asp329 acts as the 4-aspartylphosphate intermediate in catalysis. Mg(2+)-binding residues include Asp588 and Asp592. Residues 644–665 (NYTIYAVSITIRIVFGFMLIAL) traverse the membrane as a helical segment. The Extracellular segment spans residues 666 to 670 (IWEFD). The chain crosses the membrane as a helical span at residues 671-693 (FSAFMVLIIAILNDGTIMTISKD). Over 694 to 709 (RVKPSPTPDSWKLKEI) the chain is Cytoplasmic. The helical transmembrane segment at 710-730 (FATGIVLGGYQAIMSVIFFWA) threads the bilayer. Residues 731–751 (AHKTDFFSDKFGVRSIRDNND) are Extracellular-facing. The chain crosses the membrane as a helical span at residues 752–772 (ELMGAVYLQVSIISQALIFVT). Residues 773–784 (RSRSWSFVERPG) are Cytoplasmic-facing. The helical transmembrane segment at 785-805 (ALLMIAFVIAQLVATLIAVYA) threads the bilayer. Residues 806 to 813 (DWTFAKVK) are Extracellular-facing. The helical transmembrane segment at 814–834 (GIGWGWAGVIWIYSIVTYFPQ) threads the bilayer. Residues 835-949 (DILKFAIRYI…IDTAGHHYTV (115 aa)) lie on the Cytoplasmic side of the membrane. At Thr881 the chain carries Phosphothreonine. A phosphoserine mark is found at Ser899 and Ser931. The tract at residues 947-949 (YTV) is interaction with 14-3-3 proteins. Thr948 carries the post-translational modification Phosphothreonine.

This sequence belongs to the cation transport ATPase (P-type) (TC 3.A.3) family. Type IIIA subfamily. Binds to 14-3-3 proteins. The binding is induced by phosphorylation of Thr-948. Binding to 14-3-3 proteins activates the H(+)-ATPase. Interacts with PPI1; this interaction promotes ATPase activity. Interacts with PSY1R. Part of a functional complex containing PSKR1, BAK1, CNGC17, and AHA. Interacts with CNGC17 and PSKR1. Triggered by SAUR9 via the phosphorylation of the C-terminal autoinhibitory domain. Interacts with AHA2. Binds to CBC1 and CBC2. In terms of processing, phosphorylated, probably by PHOT1 and PHOT2, at C-terminal Thr-948 in guard cells in response to blue light to induce stomatal opening. In terms of tissue distribution, expressed in guard cells, mesophyll cells, leaves and roots.

The protein resides in the cell membrane. It catalyses the reaction ATP + H2O + H(+)(in) = ADP + phosphate + 2 H(+)(out). With respect to regulation, phosphorylation on Thr residues is repressed by tyrphostin 9, sphingosine, GW5074 and BML-265. By contrast, the fungal phytotoxin fusicoccin (FC) promotes phosphorylation of Thr-948 independently to BHP, thus leading to large stomatal opening. The plasma membrane H(+) ATPase of plants and fungi generates a proton gradient that drives the active transport of nutrients by H(+)-symport. The resulting external acidification and/or internal alkinization may mediate growth responses. Forms a functional cation-translocating unit with CNGC17 that is activated by PSKR1/BAK1 and possibly other BAK1/RLK complexes. Promotes stomatal opening in response to blue light. The polypeptide is ATPase 1, plasma membrane-type (Arabidopsis thaliana (Mouse-ear cress)).